Consider the following 264-residue polypeptide: Glucosamine-6-phosphate deaminase (264 aa).

Catalysis depends on Asp72, which acts as the Proton acceptor; for enolization step. The active-site For ring-opening step is Asp141. The active-site Proton acceptor; for ring-opening step is the His143. The For ring-opening step role is filled by Glu148.

The protein belongs to the glucosamine/galactosamine-6-phosphate isomerase family. NagB subfamily. In terms of assembly, homohexamer.

It catalyses the reaction alpha-D-glucosamine 6-phosphate + H2O = beta-D-fructose 6-phosphate + NH4(+). The protein operates within amino-sugar metabolism; N-acetylneuraminate degradation; D-fructose 6-phosphate from N-acetylneuraminate: step 5/5. Its activity is regulated as follows. Allosterically activated by N-acetylglucosamine 6-phosphate (GlcNAc6P). In terms of biological role, catalyzes the reversible isomerization-deamination of glucosamine 6-phosphate (GlcN6P) to form fructose 6-phosphate (Fru6P) and ammonium ion. The polypeptide is Glucosamine-6-phosphate deaminase (Glaesserella parasuis serovar 5 (strain SH0165) (Haemophilus parasuis)).